The sequence spans 259 residues: Ribonuclease PH (259 aa).

Phosphate is bound by residues arginine 88 and 126–128 (GTR).

Belongs to the RNase PH family. In terms of assembly, homohexameric ring arranged as a trimer of dimers.

The enzyme catalyses tRNA(n+1) + phosphate = tRNA(n) + a ribonucleoside 5'-diphosphate. Phosphorolytic 3'-5' exoribonuclease that plays an important role in tRNA 3'-end maturation. Removes nucleotide residues following the 3'-CCA terminus of tRNAs; can also add nucleotides to the ends of RNA molecules by using nucleoside diphosphates as substrates, but this may not be physiologically important. Probably plays a role in initiation of 16S rRNA degradation (leading to ribosome degradation) during starvation. The polypeptide is Ribonuclease PH (Mycobacterium avium (strain 104)).